The following is a 311-amino-acid chain: Formimidoylglutamase (311 aa).

Mn(2+)-binding residues include histidine 130, aspartate 155, histidine 157, aspartate 159, cysteine 242, and aspartate 244.

It belongs to the arginase family. The cofactor is Mn(2+).

The catalysed reaction is N-formimidoyl-L-glutamate + H2O = formamide + L-glutamate. It functions in the pathway amino-acid degradation; L-histidine degradation into L-glutamate; L-glutamate from N-formimidoyl-L-glutamate (hydrolase route): step 1/1. In terms of biological role, catalyzes the conversion of N-formimidoyl-L-glutamate to L-glutamate and formamide. This is Formimidoylglutamase from Staphylococcus aureus (strain MSSA476).